Here is a 262-residue protein sequence, read N- to C-terminus: Nodulation protein J (262 aa).

In terms of domain architecture, ABC transmembrane type-2 spans 33–259; that stretch reads ASILGNLADP…FLSTALLRRR (227 aa). The next 7 helical transmembrane spans lie at 35-55, 62-82, 102-122, 127-147, 148-168, 177-197, and 231-251; these read ILGNLADPLIYLFGLGAGLGM, GVSYIAFLSAGMVATSAMTAS, AILHTQVTIGDIVLGELAWAA, LAGTGIGVVAATLGYTEWVSL, LYALPVIALTGLAFASLAMIV, YFIFYQTLVITPMLFLSGAVF, and LVHVGLHIGALCCYAVVPFFL.

This sequence belongs to the ABC-2 integral membrane protein family. Lipooligosaccharide exporter (TC 3.A.1.102) subfamily. The complex is composed of two ATP-binding proteins (NodI) and two transmembrane proteins (NodJ).

It is found in the cell inner membrane. Part of the ABC transporter complex NodIJ involved in the export of the nodulation factors (Nod factors), the bacterial signal molecules that induce symbiosis and subsequent nodulation induction. Nod factors are LCO (lipo-chitin oligosaccharide), a modified beta-1,4-linked N-acetylglucosamine oligosaccharide. This subunit encodes the transporter. The polypeptide is Nodulation protein J (nodJ) (Rhizobium meliloti (strain 1021) (Ensifer meliloti)).